The primary structure comprises 234 residues: Carboxy-S-adenosyl-L-methionine synthase (234 aa).

S-adenosyl-L-methionine-binding positions include Tyr35, 60–62 (GCS), 109–110 (DV), Asn124, and Arg191.

The protein belongs to the class I-like SAM-binding methyltransferase superfamily. Cx-SAM synthase family. As to quaternary structure, homodimer.

It catalyses the reaction prephenate + S-adenosyl-L-methionine = carboxy-S-adenosyl-L-methionine + 3-phenylpyruvate + H2O. Its function is as follows. Catalyzes the conversion of S-adenosyl-L-methionine (SAM) to carboxy-S-adenosyl-L-methionine (Cx-SAM). This chain is Carboxy-S-adenosyl-L-methionine synthase, found in Campylobacter curvus (strain 525.92).